The sequence spans 236 residues: MAAAAPPPPPTAAPEPNMVAPLISPIGHPMFSRIRLATPSDVPFIHKLIHQMAVFERLTHLFSATESGLASTLFTSRPFQSFTVFLLEVSRSPFPATITSSPSPDFTPFFKTHNLDLPIDDPESYNFSPDMLNDVVVAGFVLFFPNYSSFLSKPGFYIEDIFVREPYRRKGFGSMLLTAVAKQAVKMGYGRVEWVVLDWNVNAIKFYEQMGAQILQEWRVCRLTGDALEAFDQVNI.

Positions 96–235 constitute an N-acetyltransferase domain; the sequence is ATITSSPSPD…DALEAFDQVN (140 aa). Acetyl-CoA is bound by residues 161–163, 169–174, 200–202, and Tyr207; these read IFV, RKGFGS, and NVN. Catalysis depends on Tyr207, which acts as the Proton donor.

Belongs to the acetyltransferase family. GNAT subfamily. In terms of assembly, oligomer. In terms of tissue distribution, expressed throughout the plant.

The protein localises to the cytoplasm. It localises to the nucleus. The enzyme catalyses an N-terminal L-alpha-aminoacyl-[protein] + acetyl-CoA = N-terminal N(alpha)-acetyl-L-alpha-aminoacyl-[protein] + CoA + H(+). The catalysed reaction is L-lysyl-[protein] + acetyl-CoA = N(6)-acetyl-L-lysyl-[protein] + CoA + H(+). Its function is as follows. Probable protein acetyltransferase with dual specificity triggering both N-alpha-acetylation (NTA) and epsilon-lysine acetylation (KA). The sequence is that of GCN5-related N-acetyltransferase 8 from Arabidopsis thaliana (Mouse-ear cress).